The primary structure comprises 363 residues: MRIAVDAMGGDYAPEEIIKGALLAHRYLQVGIALVGRPDALEPFLPRPLPPGITVVPAEEVVGMAEEPLAVRRKPQASINVSMQQVRAKQADAVVAAGNTGATMAAAYLNLGRLAGIDRPAIGALLPTLKGKPVLLLDVGANVDCRPRFLEQFARMGSLYCQCVLGIEKPRVGLLNIGEEPNKGNDLALATHQRLTQLPGIHFAGNAEGRDVLTGDFDVVVCDGFVGNALLKFAESVGQVITQVLREELPRGWRGKLGCWLLQPNLKQVKRRMDYVEYGGALLLGVNGICVITHGSSKAAMVYHAIRLAKEAAEQKILQRLQAEMADSHPSKVNAGENAPPLASASNPSPEALPVGSLDRVEG.

Residues 326-363 are disordered; sequence ADSHPSKVNAGENAPPLASASNPSPEALPVGSLDRVEG. Residues 337–354 are compositionally biased toward low complexity; sequence ENAPPLASASNPSPEALP.

Belongs to the PlsX family. In terms of assembly, homodimer. Probably interacts with PlsY.

The protein localises to the cytoplasm. The catalysed reaction is a fatty acyl-[ACP] + phosphate = an acyl phosphate + holo-[ACP]. It participates in lipid metabolism; phospholipid metabolism. In terms of biological role, catalyzes the reversible formation of acyl-phosphate (acyl-PO(4)) from acyl-[acyl-carrier-protein] (acyl-ACP). This enzyme utilizes acyl-ACP as fatty acyl donor, but not acyl-CoA. This chain is Phosphate acyltransferase, found in Synechococcus sp. (strain JA-3-3Ab) (Cyanobacteria bacterium Yellowstone A-Prime).